The following is a 142-amino-acid chain: Snaclec GPIB-binding protein subunit alpha (142 aa).

3 disulfides stabilise this stretch: C6–C17, C39–C136, and C111–C128. One can recognise a C-type lectin domain in the interval 13–137 (HRQYCYKFFQ…CVEGNPFVCK (125 aa)).

This sequence belongs to the snaclec family. As to quaternary structure, heterodimer of subunits alpha and beta; disulfide-linked. In terms of tissue distribution, expressed by the venom gland.

The protein resides in the secreted. Its function is as follows. Binds to platelet GPIb (subunit alpha) (GP1BA) and functions as a receptor blocker for vWF binding to GPIb. The platelet GPIb-binding site resides on the GPIB-BP subunit beta and not on the alpha subunit. At a final concentration of 104 nM totally abolishes vWF-dependent shear-induced platelet aggregation (SIPA) at a high shear stress, but had no effect on SIPA at a low shear stress. This is Snaclec GPIB-binding protein subunit alpha from Bothrops jararaca (Jararaca).